We begin with the raw amino-acid sequence, 329 residues long: GTP 3',8-cyclase (329 aa).

The 227-residue stretch at 8–234 (AFARKFYYLR…QLRQRSDGPA (227 aa)) folds into the Radical SAM core domain. Residue R17 coordinates GTP. 2 residues coordinate [4Fe-4S] cluster: C24 and C28. Y30 contacts S-adenosyl-L-methionine. C31 contacts [4Fe-4S] cluster. R68 serves as a coordination point for GTP. S-adenosyl-L-methionine is bound at residue G72. T99 contributes to the GTP binding site. Residue S123 participates in S-adenosyl-L-methionine binding. GTP is bound at residue K160. An S-adenosyl-L-methionine-binding site is contributed by M194. C257 and C260 together coordinate [4Fe-4S] cluster. 262 to 264 (RLR) serves as a coordination point for GTP. C274 is a binding site for [4Fe-4S] cluster.

It belongs to the radical SAM superfamily. MoaA family. In terms of assembly, monomer and homodimer. [4Fe-4S] cluster is required as a cofactor.

The catalysed reaction is GTP + AH2 + S-adenosyl-L-methionine = (8S)-3',8-cyclo-7,8-dihydroguanosine 5'-triphosphate + 5'-deoxyadenosine + L-methionine + A + H(+). The protein operates within cofactor biosynthesis; molybdopterin biosynthesis. Functionally, catalyzes the cyclization of GTP to (8S)-3',8-cyclo-7,8-dihydroguanosine 5'-triphosphate. This Escherichia coli O7:K1 (strain IAI39 / ExPEC) protein is GTP 3',8-cyclase.